Here is a 194-residue protein sequence, read N- to C-terminus: Large ribosomal subunit protein bL25 (194 aa).

This sequence belongs to the bacterial ribosomal protein bL25 family. CTC subfamily. Part of the 50S ribosomal subunit; part of the 5S rRNA/L5/L18/L25 subcomplex. Contacts the 5S rRNA. Binds to the 5S rRNA independently of L5 and L18.

This is one of the proteins that binds to the 5S RNA in the ribosome where it forms part of the central protuberance. The sequence is that of Large ribosomal subunit protein bL25 from Neorickettsia sennetsu (strain ATCC VR-367 / Miyayama) (Ehrlichia sennetsu).